We begin with the raw amino-acid sequence, 157 residues long: UPF0225 protein PMI1492 (157 aa).

It belongs to the UPF0225 family.

This is UPF0225 protein PMI1492 from Proteus mirabilis (strain HI4320).